Reading from the N-terminus, the 411-residue chain is MDAIILCAGKGTRLHPITESRPKPMIPIAGKPILEHIIEKIENHVEKIYLVVGFEKEKIIEYFNENPKIEYILQEKQLGTGHAVLTAKNFIKDDFLVLNGDVIFEDSIDEILDYENAVALSKVDNPENFGVIELGYDNKVINLLEKPKKEELTSNFINAGIYKLQNSVFGILENLVPSERGEIELTDALKKLIEIGKLHGVELNGYWNDIGHPWDVLSANSHFLNKIISKISGKIENNVSITGNVIIEEGAVIKSNSVIEGPVIIKSGSIVGPLAYIRPNTILMENNFVGNSSEIKGSIIFENTKIPHLSYVGDSIIGANCNFGCNTITANLRFDNKPVIVNIKGKPVKSVRKLGAIIGDNVKSGIQVSFMPGVKIGSNSLIGANCLIDSDIEQESFVYKKDELVITKKRN.

The tract at residues 1-204 (MDAIILCAGK…IGKLHGVELN (204 aa)) is pyrophosphorylase. UTP-binding positions include 6-9 (LCAG), Q74, and G79. Residues T80, G130, N142, and N158 each coordinate N-acetyl-alpha-D-glucosamine 1-phosphate. Residues 205 to 224 (GYWNDIGHPWDVLSANSHFL) are linker. Residues 225–411 (NKIISKISGK…DELVITKKRN (187 aa)) are N-acetyltransferase. Catalysis depends on H308, which acts as the Proton acceptor. Residues A384 and K401 each coordinate acetyl-CoA.

In the N-terminal section; belongs to the N-acetylglucosamine-1-phosphate uridyltransferase family. This sequence in the C-terminal section; belongs to the transferase hexapeptide repeat family.

The enzyme catalyses N-acetyl-alpha-D-glucosamine 1-phosphate + UTP + H(+) = UDP-N-acetyl-alpha-D-glucosamine + diphosphate. It catalyses the reaction alpha-D-glucosamine 1-phosphate + acetyl-CoA = N-acetyl-alpha-D-glucosamine 1-phosphate + CoA + H(+). It functions in the pathway nucleotide-sugar biosynthesis; UDP-N-acetyl-alpha-D-glucosamine biosynthesis; N-acetyl-alpha-D-glucosamine 1-phosphate from alpha-D-glucosamine 6-phosphate (route II): step 2/2. Its pathway is nucleotide-sugar biosynthesis; UDP-N-acetyl-alpha-D-glucosamine biosynthesis; UDP-N-acetyl-alpha-D-glucosamine from N-acetyl-alpha-D-glucosamine 1-phosphate: step 1/1. Catalyzes the last two sequential reactions in the de novo biosynthetic pathway for UDP-N-acetyl-glucosamine (UDP-GlcNAc). Responsible for the acetylation of GlcN-1-P to GlcNAc-1-P, and for the uridyl transfer from UTP to GlcNAc-1-P, to produce UDP-GlcNAc and pyrophosphate. This Methanococcus maripaludis (strain C5 / ATCC BAA-1333) protein is Bifunctional protein GlmU.